A 506-amino-acid chain; its full sequence is MKEYQVYLERARSRQQDFLYPLIFREYIYGLAYSQNFNRSIFVENLGYDNKYSLLIVKRLITRMYQQNHLIISANDSNKNPFLGYNKNFYSQIISEGFAIVVEIPFFLELSSSLEEPEIIKSYKNVRSIHSIFPFLEDKLTHLNYVSDIRIPYPIHLEILVQILRYWVKDAPFFHLLRLFLYNFCNWNSFITTKKSISTFSKSNPRLFLFLYHFYVCEYESIFLFLRNKSSHLRLKSFSVFFERIFFYAKREHLVEVFAKDFSYTLTFFKDPLIHYVRYQGKCILASKNAPFLMNKWKHYFIHLWQGFFDVWSQPRTININQLSEHSFQLLGYFLNVRLNRSVVRSQMLQNTFLIEIVSKKLDIIVPIIPLIRSLAKAKFCNVLGHPISKPVWADSSDFDIIDRFLRICRNLSHYYNGSSKKKSLYQIKYILRLSCIKTLACKHKSTVRAFLKRSGSEELLEAFFTEEEEILSLIFPRDSSTLHRLNRNRIWYLDILFSNDLVNDE.

This sequence belongs to the intron maturase 2 family. MatK subfamily.

It localises to the plastid. The protein resides in the chloroplast. In terms of biological role, usually encoded in the trnK tRNA gene intron. Probably assists in splicing its own and other chloroplast group II introns. The sequence is that of Maturase K from Melilotus indicus (Sourclover).